A 1182-amino-acid chain; its full sequence is Tyrosine-protein kinase ABL2 (1182 aa).

Disordered stretches follow at residues methionine 1 to asparagine 47 and glutamate 60 to tyrosine 80. Glycine 2 carries the N-myristoyl glycine lipid modification. Residues glycine 2–glutamate 106 form a CAP region. The span at arginine 20–proline 30 shows a compositional bias: low complexity. The residue at position 97 (serine 97) is a Phosphoserine. The 61-residue stretch at serine 107–serine 167 folds into the SH3 domain. 6 positions are modified to phosphotyrosine: tyrosine 116, tyrosine 161, tyrosine 174, tyrosine 185, tyrosine 218, and tyrosine 231. One can recognise an SH2 domain in the interval tryptophan 173–alanine 263. The residue at position 261 (tyrosine 261) is a Phosphotyrosine; by ABL1 and autocatalysis. Phosphotyrosine; by autocatalysis is present on tyrosine 272. Serine 275 carries the phosphoserine modification. The 252-residue stretch at isoleucine 288–phenylalanine 539 folds into the Protein kinase domain. An ATP-binding site is contributed by leucine 294–valine 302. Tyrosine 299 and tyrosine 303 each carry phosphotyrosine. ATP-binding positions include lysine 317 and glutamate 362–asparagine 368. The active-site Proton acceptor is the aspartate 409. The Kinase activation loop motif lies at aspartate 427–tryptophan 451. Tyrosine 439 bears the Phosphotyrosine; by autocatalysis and SRC-type Tyr-kinases mark. Residue tyrosine 459 is modified to Phosphotyrosine. Tyrosine 568 carries the post-translational modification Phosphotyrosine; by autocatalysis. The tract at residues isoleucine 611–glutamate 641 is disordered. Residues serine 620, serine 631, and serine 633 each carry the phosphoserine modification. The residue at position 647 (aspartate 647) is a Phosphotyrosine. The segment at serine 654–glutamate 674 is disordered. At serine 655 the chain carries Phosphoserine. Residues lysine 658–arginine 660 carry the Nuclear localization signal motif. 2 positions are modified to phosphotyrosine: alanine 662 and arginine 668. Residues serine 669, serine 670, and serine 671 each carry the phosphoserine modification. Phosphotyrosine is present on residues tyrosine 683 and tyrosine 718. The residue at position 683 (tyrosine 683) is a Phosphotyrosine; by autocatalysis. The tract at residues serine 694–lysine 930 is F-actin-binding. Residues leucine 763–glutamine 794 form a disordered region. Lysine 776 carries the N6-acetyllysine modification. Polar residues predominate over residues arginine 780–leucine 791. Residue serine 783 is modified to Phosphoserine. Position 800 is a phosphothreonine (threonine 800). The span at arginine 807–glutamate 823 shows a compositional bias: polar residues. The segment at arginine 807–lysine 851 is disordered. Phosphoserine occurs at positions 817 and 820. The segment covering asparagine 825 to lysine 849 has biased composition (basic and acidic residues). Phosphoserine is present on residues serine 915 and serine 936. Residues histidine 964 to lysine 1024 are disordered. Polar residues predominate over residues threonine 1010–glutamine 1019. The segment at glutamate 1020–arginine 1182 is F-actin-binding.

The protein belongs to the protein kinase superfamily. Tyr protein kinase family. ABL subfamily. As to quaternary structure, interacts with PSMA7. Interacts with CTTN. Found in a complex with ABL1, ABL2, CRK and UNC119; leading to the inhibition of CRK phosphorylation by ABL kinases. Mg(2+) is required as a cofactor. Mn(2+) serves as cofactor. Post-translationally, phosphorylated at Tyr-261 by ABL1 in response to oxidative stress. Phosphorylated by PDGFRB. Polyubiquitinated. Polyubiquitination of ABL2 leads to degradation. Widely expressed.

It is found in the cytoplasm. The protein localises to the cytoskeleton. It catalyses the reaction L-tyrosyl-[protein] + ATP = O-phospho-L-tyrosyl-[protein] + ADP + H(+). Its activity is regulated as follows. Stabilized in the inactive form by an association between the SH3 domain and the SH2-TK linker region, interactions of the N-terminal cap, and contributions from an N-terminal myristoyl group and phospholipids. Activated by autophosphorylation as well as by SRC-family kinase-mediated phosphorylation. Activated by RIN1 binding to the SH2 and SH3 domains. Inhibited by imatinib mesylate (Gleevec) which is used for the treatment of chronic myeloid leukemia (CML). Phosphatidylinositol 4,5-bisphosphate (PIP2), a highly abundant phosphoinositide known to regulate cytoskeletal and membrane proteins, inhibits the tyrosine kinase activity. Its function is as follows. Non-receptor tyrosine-protein kinase that plays an ABL1-overlapping role in key processes linked to cell growth and survival such as cytoskeleton remodeling in response to extracellular stimuli, cell motility and adhesion and receptor endocytosis. Coordinates actin remodeling through tyrosine phosphorylation of proteins controlling cytoskeleton dynamics like MYH10 (involved in movement); CTTN (involved in signaling); or TUBA1 and TUBB (microtubule subunits). Binds directly F-actin and regulates actin cytoskeletal structure through its F-actin-bundling activity. Involved in the regulation of cell adhesion and motility through phosphorylation of key regulators of these processes such as CRK, CRKL, DOK1 or ARHGAP35. Adhesion-dependent phosphorylation of ARHGAP35 promotes its association with RASA1, resulting in recruitment of ARHGAP35 to the cell periphery where it inhibits RHO. Phosphorylates multiple receptor tyrosine kinases like PDGFRB and other substrates which are involved in endocytosis regulation such as RIN1. In brain, may regulate neurotransmission by phosphorylating proteins at the synapse. ABL2 also acts as a regulator of multiple pathological signaling cascades during infection. Pathogens can highjack ABL2 kinase signaling to reorganize the host actin cytoskeleton for multiple purposes, like facilitating intracellular movement and host cell exit. Finally, functions as its own regulator through autocatalytic activity as well as through phosphorylation of its inhibitor, ABI1. Positively regulates chemokine-mediated T-cell migration, polarization, and homing to lymph nodes and immune-challenged tissues, potentially via activation of NEDD9/HEF1 and RAP1. This is Tyrosine-protein kinase ABL2 (ABL2) from Homo sapiens (Human).